A 305-amino-acid polypeptide reads, in one-letter code: Aspartate carbamoyltransferase catalytic subunit (305 aa).

Residues Arg-54 and Thr-55 each contribute to the carbamoyl phosphate site. Lys-83 contacts L-aspartate. 3 residues coordinate carbamoyl phosphate: Arg-104, His-132, and Gln-135. 2 residues coordinate L-aspartate: Arg-165 and Arg-226. Leu-265 and Pro-266 together coordinate carbamoyl phosphate.

It belongs to the aspartate/ornithine carbamoyltransferase superfamily. ATCase family. Heterooligomer of catalytic and regulatory chains.

It carries out the reaction carbamoyl phosphate + L-aspartate = N-carbamoyl-L-aspartate + phosphate + H(+). It functions in the pathway pyrimidine metabolism; UMP biosynthesis via de novo pathway; (S)-dihydroorotate from bicarbonate: step 2/3. In terms of biological role, catalyzes the condensation of carbamoyl phosphate and aspartate to form carbamoyl aspartate and inorganic phosphate, the committed step in the de novo pyrimidine nucleotide biosynthesis pathway. The sequence is that of Aspartate carbamoyltransferase catalytic subunit from Pyrobaculum arsenaticum (strain DSM 13514 / JCM 11321 / PZ6).